The sequence spans 746 residues: Exostosin-1 (746 aa).

Topologically, residues 1-7 are cytoplasmic; the sequence is MQAKKRY. A helical; Signal-anchor for type II membrane protein membrane pass occupies residues 8–28; the sequence is FILLSAGSCLALLFYFGGLQF. Residues 29 to 746 lie on the Lumenal side of the membrane; that stretch reads RASRSHSRRE…RKKYRDIERL (718 aa). Asn-89 carries an N-linked (GlcNAc...) asparagine glycan. Disulfide bonds link Cys-98-Cys-103 and Cys-109-Cys-152. Residues Leu-166 and Tyr-203 each coordinate a protein. UDP is bound by residues Lys-267, Lys-269, Tyr-271, and Arg-280. The cysteines at positions 298 and 312 are disulfide-linked. His-300 serves as a coordination point for a protein. Residues Tyr-319 and Tyr-324 each contribute to the UDP site. An N-linked (GlcNAc...) asparagine glycan is attached at Asn-330. 2 cysteine pairs are disulfide-bonded: Cys-334-Cys-355 and Cys-652-Cys-704. Arg-346 and Glu-349 together coordinate UDP.

This sequence belongs to the glycosyltransferase 47 family. In terms of assembly, part of the heparan sulfate polymerase, a dimeric complex composed of EXT1 and EXT2. Could also form homooligomeric complexes. Interacts with NDST1. Post-translationally, N-glycosylated.

It is found in the golgi apparatus membrane. It localises to the golgi apparatus. The protein resides in the cis-Golgi network membrane. Its subcellular location is the endoplasmic reticulum membrane. The catalysed reaction is 3-O-{alpha-D-GlcNAc-[(1-&gt;4)-beta-D-GlcA-(1-&gt;4)-alpha-D-GlcNAc](n)-(1-&gt;4)-beta-D-GlcA-(1-&gt;3)-beta-D-Gal-(1-&gt;3)-beta-D-Gal-(1-&gt;4)-beta-D-Xyl}-L-seryl-[protein] + UDP-alpha-D-glucuronate = 3-O-{[(1-&gt;4)-beta-D-GlcA-(1-&gt;4)-alpha-D-GlcNAc](n+1)-(1-&gt;4)-beta-D-GlcA-(1-&gt;3)-beta-D-Gal-(1-&gt;3)-beta-D-Gal-(1-&gt;4)-beta-D-Xyl}-L-seryl-[protein] + UDP + H(+). The protein operates within protein modification; protein glycosylation. Glycosyltransferase forming with EXT2 the heterodimeric heparan sulfate polymerase which catalyzes the elongation of the heparan sulfate glycan backbone. Glycan backbone extension consists in the alternating transfer of (1-&gt;4)-beta-D-GlcA and (1-&gt;4)-alpha-D-GlcNAc residues from their respective UDP-sugar donors. Both EXT1 and EXT2 are required for the full activity of the polymerase since EXT1 bears the N-acetylglucosaminyl-proteoglycan 4-beta-glucuronosyltransferase activity within the complex while EXT2 carries the glucuronosyl-N-acetylglucosaminyl-proteoglycan 4-alpha-N-acetylglucosaminyltransferase activity. Heparan sulfate proteoglycans are ubiquitous components of the extracellular matrix and play an important role in tissue homeostasis and signaling. The polypeptide is Exostosin-1 (EXT1) (Pongo abelii (Sumatran orangutan)).